Reading from the N-terminus, the 67-residue chain is Probable Sec-independent protein translocase protein TatE (67 aa).

Residues 4–21 form a helical membrane-spanning segment; sequence ISITKLLVVAALVVLLFG. Residues 46-67 are disordered; the sequence is EDAGAKKEAGGDIQAEKLSHKE.

It belongs to the TatA/E family. TatE subfamily.

Its subcellular location is the cell inner membrane. Part of the twin-arginine translocation (Tat) system that transports large folded proteins containing a characteristic twin-arginine motif in their signal peptide across membranes. TatE shares overlapping functions with TatA. This chain is Probable Sec-independent protein translocase protein TatE, found in Citrobacter koseri (strain ATCC BAA-895 / CDC 4225-83 / SGSC4696).